Here is a 1866-residue protein sequence, read N- to C-terminus: Nucleoporin Nup188 (1866 aa).

The protein belongs to the Nup188 family. In terms of assembly, part of the nuclear pore complex (NPC).

Its subcellular location is the nucleus. The protein resides in the nuclear pore complex. Component of the nuclear pore complex (NPC), a complex required for the trafficking across the nuclear envelope. Required for proper protein transport into the nucleus. This is Nucleoporin Nup188 from Drosophila melanogaster (Fruit fly).